A 378-amino-acid chain; its full sequence is Probable pectin lyase A (378 aa).

The N-terminal stretch at 1–18 (MKYASFLALVGFITSTSA) is a signal peptide. 2 disulfide bridges follow: Cys81/Cys100 and Cys90/Cys224. Arg254 is an active-site residue. Cys321 and Cys329 form a disulfide bridge.

The protein belongs to the polysaccharide lyase 1 family.

The protein localises to the secreted. The catalysed reaction is Eliminative cleavage of (1-&gt;4)-alpha-D-galacturonan methyl ester to give oligosaccharides with 4-deoxy-6-O-methyl-alpha-D-galact-4-enuronosyl groups at their non-reducing ends.. Pectinolytic enzymes consist of four classes of enzymes: pectin lyase, polygalacturonase, pectin methylesterase and rhamnogalacturonase. Among pectinolytic enzymes, pectin lyase is the most important in depolymerization of pectin, since it cleaves internal glycosidic bonds of highly methylated pectins. In Aspergillus clavatus (strain ATCC 1007 / CBS 513.65 / DSM 816 / NCTC 3887 / NRRL 1 / QM 1276 / 107), this protein is Probable pectin lyase A (pelA).